Reading from the N-terminus, the 420-residue chain is MIOREX complex component 9 (420 aa).

The next 2 membrane-spanning stretches (helical) occupy residues 125-145 (VYKVSPFFIIFATASIFTFIL) and 149-169 (IVVIPLIFHFFFPLLIMFFFF).

In terms of assembly, associates with the mitochondrial ribosome.

Its subcellular location is the mitochondrion. It localises to the mitochondrion membrane. In terms of biological role, component of MIOREX complexes, large expressome-like assemblies of ribosomes with factors involved in all the steps of post-transcriptional gene expression. In Saccharomyces cerevisiae (strain ATCC 204508 / S288c) (Baker's yeast), this protein is MIOREX complex component 9.